The primary structure comprises 562 residues: Probable sesquiterpene synthase (562 aa).

D315, D319, and E467 together coordinate Mg(2+). A DDXXD motif motif is present at residues 315–319; sequence DDIYD.

This sequence belongs to the terpene synthase family. Tpsa subfamily. Mg(2+) serves as cofactor. It depends on Mn(2+) as a cofactor.

Its function is as follows. Sesquiterpene synthase. In Santalum murrayanum (Bitter quandong), this protein is Probable sesquiterpene synthase (STPS).